The following is a 469-amino-acid chain: Phosphatidylinositol 4-kinase type 2-alpha (469 aa).

Disordered regions lie at residues 1 to 30 and 50 to 72; these read MDET…ATVP and TATS…DQER. Residues 16 to 25 are compositionally biased toward polar residues; it reads EYSYQSQCSP. A compositionally biased stretch (low complexity) spans 50–60; it reads TATSCGSAASG. Positions 115–443 constitute a PI3K/PI4K catalytic domain; sequence DILPERISQG…VQTPPVIVET (329 aa). Positions 121–127 are G-loop; that stretch reads ISQGSSG. ATP-binding positions include 122 to 128 and Lys143; that span reads SQGSSGS. The tract at residues 148–150 is important for substrate binding; the sequence is EPY. The tract at residues 156-169 is important for interaction with membranes; sequence KWTKWLQKLCCPCC. 4 S-palmitoyl cysteine lipidation sites follow: Cys165, Cys166, Cys168, and Cys169. Residue 252 to 255 participates in ATP binding; it reads QIFV. The tract at residues 259 to 267 is important for interaction with membranes; sequence KDADYWLRR. Residues 296 to 304 form a catalytic loop region; sequence RNTDRGNDN. Residues 334 to 354 are activation loop; that stretch reads AIDNGLAFPLKHPDSWRAYPF. Asp336 is a binding site for ATP. Residues 349–358 are important for interaction with membranes; sequence WRAYPFYWAW.

This sequence belongs to the PI3/PI4-kinase family. Type II PI4K subfamily.

Its subcellular location is the golgi apparatus. The protein resides in the trans-Golgi network membrane. It localises to the membrane raft. The protein localises to the endosome. It is found in the endosome membrane. Its subcellular location is the cytoplasmic vesicle. The protein resides in the cell projection. It localises to the dendrite. The protein localises to the presynaptic cell membrane. It is found in the synapse. Its subcellular location is the synaptosome. The protein resides in the mitochondrion. It localises to the membrane. The protein localises to the cell membrane. It is found in the perikaryon. Its subcellular location is the neuron projection. It carries out the reaction a 1,2-diacyl-sn-glycero-3-phospho-(1D-myo-inositol) + ATP = a 1,2-diacyl-sn-glycero-3-phospho-(1D-myo-inositol 4-phosphate) + ADP + H(+). Its function is as follows. Membrane-bound phosphatidylinositol-4 kinase (PI4-kinase) that catalyzes the phosphorylation of phosphatidylinositol (PI) to phosphatidylinositol 4-phosphate (PI4P), a lipid that plays important roles in endocytosis, Golgi function, protein sorting and membrane trafficking. Besides, phosphorylation of phosphatidylinositol (PI) to phosphatidylinositol 4-phosphate (PI4P) is the first committed step in the generation of phosphatidylinositol 4,5-bisphosphate (PIP2), a precursor of the second messenger inositol 1,4,5-trisphosphate (InsP3). The polypeptide is Phosphatidylinositol 4-kinase type 2-alpha (pi4k2a) (Xenopus laevis (African clawed frog)).